The primary structure comprises 587 residues: Inorganic phosphate transporter 2-1, chloroplastic (587 aa).

A chloroplast-targeting transit peptide spans 1–71 (MTLPYRFSSV…VCPLASFSSY (71 aa)). Residues 74–106 (SEGEEQHHADQPIQNPHESSTVSNESDGKGNAE) form a disordered region. Over residues 85-98 (PIQNPHESSTVSNE) the composition is skewed to polar residues. 12 helical membrane-spanning segments follow: residues 127–147 (AISI…KSLG), 154–174 (TKLL…NIGA), 195–215 (AVMT…THVT), 233–253 (MLLF…LQVA), 265–285 (CIVG…AVFW), 289–309 (AKVA…SFLV), 327–347 (AAAA…SAAL), 352–372 (IFPI…IVFD), 413–433 (LEIV…FMSF), 465–485 (IVIP…GLTM), 523–543 (LGLP…VGFA), and 559–579 (ASWL…TWIF).

Belongs to the inorganic phosphate transporter (PiT) (TC 2.A.20.2) family. As to expression, mostly expressed in young green tissues. Present in both auto- and heterotrophic tissues. Also expressed in root stele.

It localises to the plastid. It is found in the chloroplast inner membrane. Low affinity H(+)/Pi chloroplastic cotransporter. Involved in inorganic phosphate (orthophosphate, Pi) uptake in green parts of plants in Pi-sufficient conditions. Required for Pi retranslocation during Pi deprivation. The protein is Inorganic phosphate transporter 2-1, chloroplastic (PHT2-1) of Arabidopsis thaliana (Mouse-ear cress).